The following is a 24-amino-acid chain: Coenzyme PQQ synthesis protein A (24 aa).

A cross-link (pyrroloquinoline quinone (Glu-Tyr)) is located at residues 16-20 (EVTMY).

It belongs to the PqqA family.

Its pathway is cofactor biosynthesis; pyrroloquinoline quinone biosynthesis. In terms of biological role, required for coenzyme pyrroloquinoline quinone (PQQ) biosynthesis. PQQ is probably formed by cross-linking a specific glutamate to a specific tyrosine residue and excising these residues from the peptide. In Pseudomonas syringae pv. syringae (strain B728a), this protein is Coenzyme PQQ synthesis protein A.